The primary structure comprises 383 residues: Succinyl-diaminopimelate desuccinylase (383 aa).

Histidine 73 serves as a coordination point for Zn(2+). The active site involves aspartate 75. Aspartate 107 lines the Zn(2+) pocket. The Proton acceptor role is filled by glutamate 141. The Zn(2+) site is built by glutamate 142, glutamate 170, and histidine 356.

It belongs to the peptidase M20A family. DapE subfamily. In terms of assembly, homodimer. Zn(2+) is required as a cofactor. It depends on Co(2+) as a cofactor.

It carries out the reaction N-succinyl-(2S,6S)-2,6-diaminopimelate + H2O = (2S,6S)-2,6-diaminopimelate + succinate. It functions in the pathway amino-acid biosynthesis; L-lysine biosynthesis via DAP pathway; LL-2,6-diaminopimelate from (S)-tetrahydrodipicolinate (succinylase route): step 3/3. Functionally, catalyzes the hydrolysis of N-succinyl-L,L-diaminopimelic acid (SDAP), forming succinate and LL-2,6-diaminopimelate (DAP), an intermediate involved in the bacterial biosynthesis of lysine and meso-diaminopimelic acid, an essential component of bacterial cell walls. This Pseudomonas syringae pv. syringae (strain B728a) protein is Succinyl-diaminopimelate desuccinylase.